Here is a 467-residue protein sequence, read N- to C-terminus: Light-independent protochlorophyllide reductase subunit N (467 aa).

[4Fe-4S] cluster is bound by residues cysteine 22, cysteine 47, and cysteine 107.

Belongs to the BchN/ChlN family. As to quaternary structure, protochlorophyllide reductase is composed of three subunits; ChlL, ChlN and ChlB. Forms a heterotetramer of two ChlB and two ChlN subunits. Requires [4Fe-4S] cluster as cofactor.

The protein localises to the plastid. It localises to the chloroplast. The catalysed reaction is chlorophyllide a + oxidized 2[4Fe-4S]-[ferredoxin] + 2 ADP + 2 phosphate = protochlorophyllide a + reduced 2[4Fe-4S]-[ferredoxin] + 2 ATP + 2 H2O. It functions in the pathway porphyrin-containing compound metabolism; chlorophyll biosynthesis (light-independent). Functionally, component of the dark-operative protochlorophyllide reductase (DPOR) that uses Mg-ATP and reduced ferredoxin to reduce ring D of protochlorophyllide (Pchlide) to form chlorophyllide a (Chlide). This reaction is light-independent. The NB-protein (ChlN-ChlB) is the catalytic component of the complex. The chain is Light-independent protochlorophyllide reductase subunit N from Pinus thunbergii (Japanese black pine).